A 357-amino-acid polypeptide reads, in one-letter code: Red-sensitive opsin (357 aa).

Residues 1–49 (MGDQWGDAVFAARRRGDDTTREAAFTYTNSNNTKDPFEGPNYHIAPRWV) lie on the Extracellular side of the membrane. N-linked (GlcNAc...) asparagine glycosylation is present at N31. A helical membrane pass occupies residues 50-74 (YNLATCWMFFVVVASTVTNGLVLVA). Over 75-86 (SAKFKKLRHPLN) the chain is Cytoplasmic. The chain crosses the membrane as a helical span at residues 87–112 (WILVNLAIADLLETLLASTISVCNQF). The Extracellular portion of the chain corresponds to 113-126 (FGYFILGHPMCVFE). C123 and C200 are joined by a disulfide. A helical transmembrane segment spans residues 127-146 (GFTVATCGIAGLWSLTVISW). Topologically, residues 147-165 (ERWVVVCKPFGNVKFDGKM) are cytoplasmic. A helical membrane pass occupies residues 166–189 (ATAGIVFTWVWSAVWCAPPIFGWS). At 190–215 (RYWPHGLKTSCGPDVFSGSEDPGVQS) the chain is on the extracellular side. A helical transmembrane segment spans residues 216-243 (YMIVLMITCCFIPLGIIILCYIAVWWAI). Over 244 to 265 (RTVAQQQKDSESTQKAEKEVSR) the chain is Cytoplasmic. A helical membrane pass occupies residues 266–289 (MVVVMIMAYCFCWGPYTFFACFAA). At 290–297 (ANPGYAFH) the chain is on the extracellular side. The helical transmembrane segment at 298 to 322 (PLAAAMPAYFAKSATIYNPVIYVFM) threads the bilayer. K309 carries the N6-(retinylidene)lysine modification. The Cytoplasmic segment spans residues 323 to 357 (NRQFRVCIMQLFGKKVDDGSEVSTSKTEVSSVAPA).

This sequence belongs to the G-protein coupled receptor 1 family. Opsin subfamily. Post-translationally, phosphorylated on some or all of the serine and threonine residues present in the C-terminal region. As to expression, the color pigments are found in the cone photoreceptor cells.

The protein resides in the membrane. In terms of biological role, visual pigments are the light-absorbing molecules that mediate vision. They consist of an apoprotein, opsin, covalently linked to cis-retinal. The sequence is that of Red-sensitive opsin (R007) from Psalidodon fasciatus (Banded astyanax).